The chain runs to 67 residues: Large ribosomal subunit protein bL35 (67 aa).

Belongs to the bacterial ribosomal protein bL35 family.

The sequence is that of Large ribosomal subunit protein bL35 from Dehalococcoides mccartyi (strain ATCC BAA-2100 / JCM 16839 / KCTC 5957 / BAV1).